The sequence spans 95 residues: Co-chaperonin GroES (95 aa).

The protein belongs to the GroES chaperonin family. As to quaternary structure, heptamer of 7 subunits arranged in a ring. Interacts with the chaperonin GroEL.

Its subcellular location is the cytoplasm. Functionally, together with the chaperonin GroEL, plays an essential role in assisting protein folding. The GroEL-GroES system forms a nano-cage that allows encapsulation of the non-native substrate proteins and provides a physical environment optimized to promote and accelerate protein folding. GroES binds to the apical surface of the GroEL ring, thereby capping the opening of the GroEL channel. The chain is Co-chaperonin GroES from Clostridium acetobutylicum (strain ATCC 824 / DSM 792 / JCM 1419 / IAM 19013 / LMG 5710 / NBRC 13948 / NRRL B-527 / VKM B-1787 / 2291 / W).